We begin with the raw amino-acid sequence, 1305 residues long: Myosin-IIIb (1305 aa).

The Protein kinase domain occupies 15–281 (WEIIETIGKG…VTHLLDHPFI (267 aa)). Residues 21–29 (IGKGTYGKV) and Lys-44 contribute to the ATP site. Residue Asp-144 is the Proton acceptor of the active site. Residues 331 to 1046 (CLEDDLVNLE…HVEQLNLLLR (716 aa)) enclose the Myosin motor domain. The tract at residues 927–949 (LMDLLSKMVVGQPHFIRCIKPND) is actin-binding. 2 consecutive IQ domains span residues 1048–1077 (VMGRVVMLQAYTKGWLGARRYKRAKEKREK) and 1075–1104 (REKGAITIQSAWRGYDARRKLKQRSRRRSE). 2 disordered regions span residues 1093 to 1164 (RKLK…VTSG) and 1200 to 1233 (SPCEDSLKPGSEEGLSQKQRAPRRRCQQPKMLSS).

The protein in the C-terminal section; belongs to the TRAFAC class myosin-kinesin ATPase superfamily. Myosin family. This sequence in the N-terminal section; belongs to the protein kinase superfamily. STE Ser/Thr protein kinase family. As to quaternary structure, interacts (via C-terminus) with ESPN. Interacts (via C-terminus) with ESPNL. In terms of tissue distribution, expressed in the cochlear hair cells (at protein level). Expressed in utricle hair bundles (at protein level).

The protein localises to the cytoplasm. Its subcellular location is the cytoskeleton. It is found in the cell projection. It localises to the stereocilium. The catalysed reaction is L-seryl-[protein] + ATP = O-phospho-L-seryl-[protein] + ADP + H(+). The enzyme catalyses L-threonyl-[protein] + ATP = O-phospho-L-threonyl-[protein] + ADP + H(+). Its function is as follows. Probable actin-based motor with a protein kinase activity. Required for normal cochlear hair bundle development and hearing. Plays an important role in the early steps of cochlear hair bundle morphogenesis. Influences the number and lengths of stereocilia to be produced and limits the growth of microvilli within the forming auditory hair bundles thereby contributing to the architecture of the hair bundle, including its staircase pattern. Involved in the elongation of actin in stereocilia tips by transporting the actin regulatory factor ESPN to the plus ends of actin filaments. The sequence is that of Myosin-IIIb (Myo3b) from Mus musculus (Mouse).